We begin with the raw amino-acid sequence, 362 residues long: uncharacterized protein (362 aa).

A helical transmembrane segment spans residues 13–33 (VLILSVGLNMLFLLLFYSAIF). The LysM domain occupies 314–357 (EEYVVQDGDSLWLIAKRFGIPMDKIIQKNGLNHHRLFPGKVLKL).

It belongs to the chlamydial CPn_0593/CT_474/TC_0759 family.

Its subcellular location is the membrane. This is an uncharacterized protein from Chlamydia pneumoniae (Chlamydophila pneumoniae).